The chain runs to 107 residues: Putative protein RFPL3S (107 aa).

Strongly expressed in the testis and weakly in brain, placenta and pancreas.

The chain is Putative protein RFPL3S (RFPL3S) from Homo sapiens (Human).